The primary structure comprises 320 residues: Glutathione synthetase (320 aa).

The ATP-grasp domain occupies 130-315 (KIFTSWFPDL…ITGMLLDYIE (186 aa)). Residue 156–212 (WEKYQDIIIKPLDAMGGANIFRIKKNDPNFSVIVENMTNYERKYCMVQNYLPEIKLG) participates in ATP binding. Residues glutamate 286 and asparagine 288 each contribute to the Mg(2+) site.

This sequence belongs to the prokaryotic GSH synthase family. It depends on Mg(2+) as a cofactor. Mn(2+) is required as a cofactor.

It catalyses the reaction gamma-L-glutamyl-L-cysteine + glycine + ATP = glutathione + ADP + phosphate + H(+). Its pathway is sulfur metabolism; glutathione biosynthesis; glutathione from L-cysteine and L-glutamate: step 2/2. This chain is Glutathione synthetase, found in Buchnera aphidicola subsp. Acyrthosiphon pisum (strain APS) (Acyrthosiphon pisum symbiotic bacterium).